The following is a 203-amino-acid chain: MENNVKKETIVDSEKVEKQQPVTAPVVNKKENTQPKAKTFKRETTTSNFEERVVKIKRISKTTKGGRMMRFSALVVIGDKNGTVGFGMGKSIEVPDAIKKAIKNANNNLIKVKQTKKGSIYHDVNGRHGAAKVMLLPAPEGTGIIAGGPVRAVVELAGFTDIYTKSRGANAPMNVIRATINGLLQQLTPQEIARLRDKSLKEL.

Basic and acidic residues predominate over residues 1–18 (MENNVKKETIVDSEKVEK). Residues 1–36 (MENNVKKETIVDSEKVEKQQPVTAPVVNKKENTQPK) form a disordered region. The 64-residue stretch at 49–112 (FEERVVKIKR…KNANNNLIKV (64 aa)) folds into the S5 DRBM domain.

It belongs to the universal ribosomal protein uS5 family. Part of the 30S ribosomal subunit. Contacts proteins S4 and S8.

Its function is as follows. With S4 and S12 plays an important role in translational accuracy. Functionally, located at the back of the 30S subunit body where it stabilizes the conformation of the head with respect to the body. This Ureaplasma urealyticum serovar 10 (strain ATCC 33699 / Western) protein is Small ribosomal subunit protein uS5.